Reading from the N-terminus, the 546-residue chain is MPDRTGPLLRTPAWRALEAHLAELQPLHLRELFARDPGRGERLVADGAGLHLDYSKQRVTEETVRLLAALAEARGLPERRAAMFRGEKVNVTEGRAVLHVALRAPRGERILVDGSDVVPEVHAVLDRMAAFADQVRSGAWTGFTGKRIRTVVNVGIGGSDLGPAMAYRALRAYATRDLAFRFVSNVDGTDLAEAVRDLDPAETLFLVASKTFTTLETMTNAASARSWLLAALGDPRAVARHFVAISTNEAEVRRFGIDPANMFGFWDWVGGRYSMDSAIGLSTMIAVGPEGFRELLAGFREMDEHFRDAPLERNLPALIGLLGVWNANLLGAETVAVLPYDQYLDRFPAYLQQLTMESNGKRVTASGAPVEGHGTGAIYWGEPGTNGQHSFYQLLHQGTHLVACDFIGFCRPLHALARHHDLLMANLFAQGEALAFGKTAEEARAEGTPEPLVPHRTFPGNRPSSTILADRLTPRTLGALVALYEHAVFTQGVIWDVDSFDQWGVELGKVLANRIVKELESPAEPALAHDGSTNALIRRYRARRGG.

The active-site Proton donor is glutamate 357. Residues histidine 389 and lysine 509 contribute to the active site.

It belongs to the GPI family.

Its subcellular location is the cytoplasm. The catalysed reaction is alpha-D-glucose 6-phosphate = beta-D-fructose 6-phosphate. It participates in carbohydrate biosynthesis; gluconeogenesis. The protein operates within carbohydrate degradation; glycolysis; D-glyceraldehyde 3-phosphate and glycerone phosphate from D-glucose: step 2/4. Its function is as follows. Catalyzes the reversible isomerization of glucose-6-phosphate to fructose-6-phosphate. This is Glucose-6-phosphate isomerase from Anaeromyxobacter sp. (strain K).